We begin with the raw amino-acid sequence, 200 residues long: Probable nicotinate-nucleotide adenylyltransferase (200 aa).

Belongs to the NadD family.

It carries out the reaction nicotinate beta-D-ribonucleotide + ATP + H(+) = deamido-NAD(+) + diphosphate. It participates in cofactor biosynthesis; NAD(+) biosynthesis; deamido-NAD(+) from nicotinate D-ribonucleotide: step 1/1. Functionally, catalyzes the reversible adenylation of nicotinate mononucleotide (NaMN) to nicotinic acid adenine dinucleotide (NaAD). This is Probable nicotinate-nucleotide adenylyltransferase from Lachnoclostridium phytofermentans (strain ATCC 700394 / DSM 18823 / ISDg) (Clostridium phytofermentans).